We begin with the raw amino-acid sequence, 234 residues long: Large ribosomal subunit protein uL1 (234 aa).

This sequence belongs to the universal ribosomal protein uL1 family. In terms of assembly, part of the 50S ribosomal subunit.

Functionally, binds directly to 23S rRNA. The L1 stalk is quite mobile in the ribosome, and is involved in E site tRNA release. Its function is as follows. Protein L1 is also a translational repressor protein, it controls the translation of the L11 operon by binding to its mRNA. The polypeptide is Large ribosomal subunit protein uL1 (Prochlorococcus marinus (strain SARG / CCMP1375 / SS120)).